Here is a 215-residue protein sequence, read N- to C-terminus: Imidazole glycerol phosphate synthase subunit HisH (215 aa).

The Glutamine amidotransferase type-1 domain occupies 8–215; that stretch reads KVVVFDYGFG…QLLNNWIGTL (208 aa). Cysteine 86 functions as the Nucleophile in the catalytic mechanism. Residues histidine 196 and glutamate 198 contribute to the active site.

Heterodimer of HisH and HisF.

The protein resides in the cytoplasm. It catalyses the reaction 5-[(5-phospho-1-deoxy-D-ribulos-1-ylimino)methylamino]-1-(5-phospho-beta-D-ribosyl)imidazole-4-carboxamide + L-glutamine = D-erythro-1-(imidazol-4-yl)glycerol 3-phosphate + 5-amino-1-(5-phospho-beta-D-ribosyl)imidazole-4-carboxamide + L-glutamate + H(+). The catalysed reaction is L-glutamine + H2O = L-glutamate + NH4(+). It participates in amino-acid biosynthesis; L-histidine biosynthesis; L-histidine from 5-phospho-alpha-D-ribose 1-diphosphate: step 5/9. IGPS catalyzes the conversion of PRFAR and glutamine to IGP, AICAR and glutamate. The HisH subunit catalyzes the hydrolysis of glutamine to glutamate and ammonia as part of the synthesis of IGP and AICAR. The resulting ammonia molecule is channeled to the active site of HisF. This chain is Imidazole glycerol phosphate synthase subunit HisH, found in Streptomyces avermitilis (strain ATCC 31267 / DSM 46492 / JCM 5070 / NBRC 14893 / NCIMB 12804 / NRRL 8165 / MA-4680).